We begin with the raw amino-acid sequence, 255 residues long: Aliphatic sulfonates import ATP-binding protein SsuB (255 aa).

The region spanning 12–233 is the ABC transporter domain; it reads LLLNAVSKHY…RLGSVRLAEL (222 aa). 44–51 is an ATP binding site; it reads GRSGGGKS.

It belongs to the ABC transporter superfamily. Aliphatic sulfonates importer (TC 3.A.1.17.2) family. In terms of assembly, the complex is composed of two ATP-binding proteins (SsuB), two transmembrane proteins (SsuC) and a solute-binding protein (SsuA).

Its subcellular location is the cell inner membrane. The catalysed reaction is ATP + H2O + aliphatic sulfonate-[sulfonate-binding protein]Side 1 = ADP + phosphate + aliphatic sulfonateSide 2 + [sulfonate-binding protein]Side 1.. In terms of biological role, part of the ABC transporter complex SsuABC involved in aliphatic sulfonates import. Responsible for energy coupling to the transport system. This is Aliphatic sulfonates import ATP-binding protein SsuB from Shigella sonnei (strain Ss046).